The chain runs to 932 residues: MYCBP-associated protein (932 aa).

Disordered stretches follow at residues 1-39 and 165-187; these read MMKKITERQSPLKLLEKKRAKAPEQPTPPIQEEPEPVSN and EEPKPKPPKEEERPSPWAPPPQH. Positions 165–178 are enriched in basic and acidic residues; the sequence is EEPKPKPPKEEERP. S559 is subject to Phosphoserine. Position 560 is a phosphothreonine (T560). The residue at position 566 (S566) is a Phosphoserine. The tract at residues 789-886 is disordered; it reads LPDEQGQKSP…TAPSQEPIDP (98 aa). Positions 795 to 806 are enriched in polar residues; the sequence is QKSPPVTESKVT. Residues 810-869 show a composition bias toward basic and acidic residues; it reads AGKEDRRGGAQEKKQLGTKDKDDKRGSKTPGKEDRPNSKKLKPKDDKKVVKSASRDRLLS.

As to quaternary structure, interacts with MYCBP.

The protein localises to the cytoplasm. Its subcellular location is the membrane. Its function is as follows. May play a role in spermatogenesis. May be involved in synaptic processes. The protein is MYCBP-associated protein of Mus musculus (Mouse).